The chain runs to 227 residues: Cytochrome c oxidase subunit 2 (227 aa).

The Mitochondrial intermembrane portion of the chain corresponds to 1–14 (MAHPFQTGLQDATS). The helical transmembrane segment at 15-45 (PIMEELLHFHDHTLMIVFLISSLVLYIISIM) threads the bilayer. Residues 46–59 (LTTKLTHTNTMDAQ) lie on the Mitochondrial matrix side of the membrane. A helical transmembrane segment spans residues 60–87 (EVETVWTILPAIILIMIALPSLRILYMM). Residues 88–227 (DEINNPSLTV…YFEKWSASML (140 aa)) are Mitochondrial intermembrane-facing. Cu cation-binding residues include H161, C196, E198, C200, H204, and M207. Mg(2+) is bound at residue E198. Y218 bears the Phosphotyrosine mark.

The protein belongs to the cytochrome c oxidase subunit 2 family. Component of the cytochrome c oxidase (complex IV, CIV), a multisubunit enzyme composed of 14 subunits. The complex is composed of a catalytic core of 3 subunits MT-CO1, MT-CO2 and MT-CO3, encoded in the mitochondrial DNA, and 11 supernumerary subunits COX4I, COX5A, COX5B, COX6A, COX6B, COX6C, COX7A, COX7B, COX7C, COX8 and NDUFA4, which are encoded in the nuclear genome. The complex exists as a monomer or a dimer and forms supercomplexes (SCs) in the inner mitochondrial membrane with NADH-ubiquinone oxidoreductase (complex I, CI) and ubiquinol-cytochrome c oxidoreductase (cytochrome b-c1 complex, complex III, CIII), resulting in different assemblies (supercomplex SCI(1)III(2)IV(1) and megacomplex MCI(2)III(2)IV(2)). Found in a complex with TMEM177, COA6, COX18, COX20, SCO1 and SCO2. Interacts with TMEM177 in a COX20-dependent manner. Interacts with COX20. Interacts with COX16. It depends on Cu cation as a cofactor.

It localises to the mitochondrion inner membrane. It catalyses the reaction 4 Fe(II)-[cytochrome c] + O2 + 8 H(+)(in) = 4 Fe(III)-[cytochrome c] + 2 H2O + 4 H(+)(out). Its function is as follows. Component of the cytochrome c oxidase, the last enzyme in the mitochondrial electron transport chain which drives oxidative phosphorylation. The respiratory chain contains 3 multisubunit complexes succinate dehydrogenase (complex II, CII), ubiquinol-cytochrome c oxidoreductase (cytochrome b-c1 complex, complex III, CIII) and cytochrome c oxidase (complex IV, CIV), that cooperate to transfer electrons derived from NADH and succinate to molecular oxygen, creating an electrochemical gradient over the inner membrane that drives transmembrane transport and the ATP synthase. Cytochrome c oxidase is the component of the respiratory chain that catalyzes the reduction of oxygen to water. Electrons originating from reduced cytochrome c in the intermembrane space (IMS) are transferred via the dinuclear copper A center (CU(A)) of subunit 2 and heme A of subunit 1 to the active site in subunit 1, a binuclear center (BNC) formed by heme A3 and copper B (CU(B)). The BNC reduces molecular oxygen to 2 water molecules using 4 electrons from cytochrome c in the IMS and 4 protons from the mitochondrial matrix. The chain is Cytochrome c oxidase subunit 2 (MT-CO2) from Ailuropoda melanoleuca (Giant panda).